The chain runs to 252 residues: Sulfoacetaldehyde reductase 2 (252 aa).

6–30 lines the NADP(+) pocket; sequence LITGATSGFGRAAARRFADAGWSLI. Residue Ser-139 participates in substrate binding. The active-site Proton acceptor is the Tyr-152.

This sequence belongs to the short-chain dehydrogenases/reductases (SDR) family. Homodimer and heterotetramer.

It catalyses the reaction 2-hydroxyethane-1-sulfonate + NADP(+) = sulfoacetaldehyde + NADPH + H(+). It functions in the pathway organosulfur degradation. Its function is as follows. Catalyzes the formation of isethionate from 2-sulfoacetaldehyde in the deaminative pathway of taurine. Constitutively expressed enzyme that only mediates a small part of the activity observed in taurine-grown cells. The polypeptide is Sulfoacetaldehyde reductase 2 (isfD2) (Chromohalobacter salexigens (strain ATCC BAA-138 / DSM 3043 / CIP 106854 / NCIMB 13768 / 1H11)).